Here is a 219-residue protein sequence, read N- to C-terminus: Glycerol-3-phosphate acyltransferase 2 (219 aa).

5 helical membrane passes run 1 to 21 (MVFW…GSTP), 55 to 75 (WPAL…VVFA), 93 to 113 (ALDL…AVLL), 135 to 155 (VLLA…GVAL), and 160 to 180 (IVSL…CGLE).

It belongs to the PlsY family. As to quaternary structure, probably interacts with PlsX.

Its subcellular location is the cell inner membrane. It carries out the reaction an acyl phosphate + sn-glycerol 3-phosphate = a 1-acyl-sn-glycero-3-phosphate + phosphate. It participates in lipid metabolism; phospholipid metabolism. In terms of biological role, catalyzes the transfer of an acyl group from acyl-phosphate (acyl-PO(4)) to glycerol-3-phosphate (G3P) to form lysophosphatidic acid (LPA). This enzyme utilizes acyl-phosphate as fatty acyl donor, but not acyl-CoA or acyl-ACP. This chain is Glycerol-3-phosphate acyltransferase 2, found in Rhizobium johnstonii (strain DSM 114642 / LMG 32736 / 3841) (Rhizobium leguminosarum bv. viciae).